Here is a 315-residue protein sequence, read N- to C-terminus: Tetratricopeptide repeat protein 23-like (315 aa).

Residues 28-56 (KIPEHQRTDESSPTSGSEESEEDTKAKEK) are disordered. Coiled coils occupy residues 65–90 (REKLAQSQKKIAQLIKGKKNIEANKE), 179–200 (REAYFNLQKSERNMKELRESYK), and 250–280 (SELVSLYQEIAQIEQLRRNHEQAIQYLHQAH).

It localises to the cytoplasm. The protein localises to the cytoskeleton. The protein resides in the microtubule organizing center. It is found in the centrosome. Its subcellular location is the spindle. It localises to the midbody. This is Tetratricopeptide repeat protein 23-like (TTC23L) from Bos taurus (Bovine).